The sequence spans 696 residues: DNA-directed RNA polymerase subunit beta' (696 aa).

Positions 70, 72, 85, and 88 each coordinate Zn(2+). Mg(2+)-binding residues include Asp540, Asp542, and Asp544.

Belongs to the RNA polymerase beta' chain family. RpoC1 subfamily. As to quaternary structure, in plastids the minimal PEP RNA polymerase catalytic core is composed of four subunits: alpha, beta, beta', and beta''. When a (nuclear-encoded) sigma factor is associated with the core the holoenzyme is formed, which can initiate transcription. The cofactor is Mg(2+). Requires Zn(2+) as cofactor.

Its subcellular location is the plastid. It is found in the chloroplast. It carries out the reaction RNA(n) + a ribonucleoside 5'-triphosphate = RNA(n+1) + diphosphate. DNA-dependent RNA polymerase catalyzes the transcription of DNA into RNA using the four ribonucleoside triphosphates as substrates. The polypeptide is DNA-directed RNA polymerase subunit beta' (Phaeodactylum tricornutum (strain CCAP 1055/1)).